Here is a 152-residue protein sequence, read N- to C-terminus: Phosphopantetheine adenylyltransferase (152 aa).

Residue S9 participates in substrate binding. ATP is bound by residues 9 to 10 and H17; that span reads SF. The substrate site is built by K41, T73, and R87. Residues 88-90, E98, and 122-128 contribute to the ATP site; these read GLR and TSFISSS.

It belongs to the bacterial CoaD family. In terms of assembly, homohexamer. Requires Mg(2+) as cofactor.

It localises to the cytoplasm. It catalyses the reaction (R)-4'-phosphopantetheine + ATP + H(+) = 3'-dephospho-CoA + diphosphate. It functions in the pathway cofactor biosynthesis; coenzyme A biosynthesis; CoA from (R)-pantothenate: step 4/5. Reversibly transfers an adenylyl group from ATP to 4'-phosphopantetheine, yielding dephospho-CoA (dPCoA) and pyrophosphate. The sequence is that of Phosphopantetheine adenylyltransferase from Flavobacterium johnsoniae (strain ATCC 17061 / DSM 2064 / JCM 8514 / BCRC 14874 / CCUG 350202 / NBRC 14942 / NCIMB 11054 / UW101) (Cytophaga johnsonae).